A 332-amino-acid chain; its full sequence is Processive diacylglycerol alpha-glucosyltransferase (332 aa).

The protein belongs to the glycosyltransferase group 1 family. Glycosyltransferase 4 subfamily. It depends on Mg(2+) as a cofactor.

Its subcellular location is the cell membrane. The catalysed reaction is a 1,2-diacyl-sn-glycerol + UDP-alpha-D-glucose = a 1,2-diacyl-3-O-(alpha-D-glucopyranosyl)-sn-glycerol + UDP + H(+). It carries out the reaction a 1,2-diacyl-3-O-(alpha-D-glucopyranosyl)-sn-glycerol + UDP-alpha-D-glucose = a 1,2-diacyl-3-O-[alpha-D-glucosyl-(1-&gt; 2)-alpha-D-glucosyl]-sn-glycerol + UDP + H(+). The protein operates within glycolipid metabolism; diglucosyl-diacylglycerol biosynthesis. Its activity is regulated as follows. Activated by the negatively charged lipids phosphatidylglycerol (PG), cardiolipin (CL), nonbilayer-prone 1,3-DAG, 1,2-dioleoylphosphatidylglycerol (DOPG) and 1,2-dioleoylphosphatidylserine (DOPS). Inhibited by 1,2-diacyl-3-O-(alpha-D-galactopyranosyl)-sn-glycerol, 1,2-diacyl-3-O-[6-O-acyl(alpha-D-glucopyranosyl)]-sn-glycerol and 1,2-diacyl-3-O-[alpha-D-glucopyranosyl-(1-&gt;2)-O-(6-O-acyl-alpha-D-glucopyranosyl)]-sn-glycerol. In terms of biological role, processive glucosyltransferase involved in the biosynthesis of both the non-bilayer-prone alpha-monoglucosyldiacylglycerol and the bilayer-forming membrane lipid alpha-diglucosyldiacylglycerol. These are major components for maintaining the anionic lipid surface charge density, for balancing the bilayer to non-bilayer phase equilibria and for keeping a constant lipid bilayer spontaneous curvature (curvature packing stress). Catalyzes the transfer of a glucosyl residue from UDP-Glc to diacylglycerol (DAG) acceptor to form the corresponding alpha-glucosyl-DAG (1,2-diacyl-3-O-(alpha-D-glucopyranosyl)-sn-glycerol), which then acts as acceptor to give alpha-diglucosyl-DAG product (3-O-(alpha-D-glucopyranosyl-alpha-(1-&gt;2)-D-glucopyranosyl)-1,2-diacyl-sn-glycerol). It can only use UDP-Glc as sugar donor. This is Processive diacylglycerol alpha-glucosyltransferase (dgs) from Acholeplasma laidlawii.